The chain runs to 356 residues: Alternative oxidase, mitochondrial (356 aa).

The helical transmembrane segment at 152 to 172 (VIRFIFLETVAGVPGMVGGML) threads the bilayer. Residues E159, E198, and H201 each contribute to the Fe cation site. A helical membrane pass occupies residues 217-237 (LMVLGAQGVFFNGFFISYLIS). The Fe cation site is built by E249, E304, and H307. Positions 330–356 (YDNPEAPHPTKSAEIVKPTGWERDEVI) are disordered.

The protein belongs to the alternative oxidase family. It depends on Fe cation as a cofactor.

It is found in the mitochondrion inner membrane. Functionally, catalyzes cyanide-resistant oxygen consumption. May increase respiration when the cytochrome respiratory pathway is restricted, or in response to low temperatures. This Ajellomyces capsulatus (Darling's disease fungus) protein is Alternative oxidase, mitochondrial (AOX1).